The chain runs to 114 residues: Nucleoid-associated protein THEYE_A1069 (114 aa).

This sequence belongs to the YbaB/EbfC family. In terms of assembly, homodimer.

The protein resides in the cytoplasm. Its subcellular location is the nucleoid. Binds to DNA and alters its conformation. May be involved in regulation of gene expression, nucleoid organization and DNA protection. This chain is Nucleoid-associated protein THEYE_A1069, found in Thermodesulfovibrio yellowstonii (strain ATCC 51303 / DSM 11347 / YP87).